Reading from the N-terminus, the 334-residue chain is GTP 3',8-cyclase (334 aa).

The 226-residue stretch at 11-236 (GFNRKIDYLR…ESTESSQGPA (226 aa)) folds into the Radical SAM core domain. Arg20 serves as a coordination point for GTP. Cys27 and Cys31 together coordinate [4Fe-4S] cluster. Tyr33 contacts S-adenosyl-L-methionine. Cys34 contacts [4Fe-4S] cluster. Arg69 contacts GTP. Residue Gly73 coordinates S-adenosyl-L-methionine. Thr100 provides a ligand contact to GTP. Residue Ser124 participates in S-adenosyl-L-methionine binding. Lys161 provides a ligand contact to GTP. Met195 serves as a coordination point for S-adenosyl-L-methionine. [4Fe-4S] cluster is bound by residues Cys260 and Cys263. 265-267 (RVR) contributes to the GTP binding site. Cys277 lines the [4Fe-4S] cluster pocket.

This sequence belongs to the radical SAM superfamily. MoaA family. As to quaternary structure, monomer and homodimer. The cofactor is [4Fe-4S] cluster.

It carries out the reaction GTP + AH2 + S-adenosyl-L-methionine = (8S)-3',8-cyclo-7,8-dihydroguanosine 5'-triphosphate + 5'-deoxyadenosine + L-methionine + A + H(+). Its pathway is cofactor biosynthesis; molybdopterin biosynthesis. Functionally, catalyzes the cyclization of GTP to (8S)-3',8-cyclo-7,8-dihydroguanosine 5'-triphosphate. In Pseudomonas putida (strain GB-1), this protein is GTP 3',8-cyclase.